The primary structure comprises 262 residues: Acyl-[acyl-carrier-protein]--UDP-N-acetylglucosamine O-acyltransferase (262 aa).

It belongs to the transferase hexapeptide repeat family. LpxA subfamily. Homotrimer.

The protein localises to the cytoplasm. The enzyme catalyses a (3R)-hydroxyacyl-[ACP] + UDP-N-acetyl-alpha-D-glucosamine = a UDP-3-O-[(3R)-3-hydroxyacyl]-N-acetyl-alpha-D-glucosamine + holo-[ACP]. Its pathway is glycolipid biosynthesis; lipid IV(A) biosynthesis; lipid IV(A) from (3R)-3-hydroxytetradecanoyl-[acyl-carrier-protein] and UDP-N-acetyl-alpha-D-glucosamine: step 1/6. Functionally, involved in the biosynthesis of lipid A, a phosphorylated glycolipid that anchors the lipopolysaccharide to the outer membrane of the cell. The polypeptide is Acyl-[acyl-carrier-protein]--UDP-N-acetylglucosamine O-acyltransferase (Haemophilus influenzae (strain ATCC 51907 / DSM 11121 / KW20 / Rd)).